An 816-amino-acid chain; its full sequence is MESRVLLRTFCLIFGLGAVWGLGVDPSLQIDVLTELELGESTTGVRQVPGLHNGTKAFLFQDTPRSVKASTATAEQFFQKLRNKHEFTILVTLKQTHLNSGVILSIHHLDHRYLELESSGHRNEVRLHYRSGSHRPHTEVFPYILADDKWHKLSLAISASHLILHIDCNKIYERVVEKPSTDLPLGTTFWLGQRNNAHGYFKGIMQDVQLLVMPQGFIAQCPDLNRTCPTCNDFHGLVQKIMELQDILAKTSAKLSRAEQRMNRLDQCYCERTCTMKGTTYREFESWIDGCKNCTCLNGTIQCETLICPNPDCPLNSALAYVDGKCCKECKSICQFQGRTYFEGERNTVYSSSGVCVLYECKDQTMKLVESSGCPALDCPESHQITLSHSCCKVCKGYDFCSERHNCMENSVCRNLNDRAVCSCRDGFRALREDNAYCEDIDECAEGRHYCRENTMCVNTPGSFMCICKTGYIRIDDYSCTEHDECITNQHNCDENALCFNTVGGHNCVCKPGYTGNGTTCKAFCKDGCRNGGACIAANVCACPQGFTGPSCETDIDECSDGFVQCDSRANCINLPGWYHCECRDGYHDNGMFSPSGESCEDIDECGTGRHSCANDTICFNLDGGYDCRCPHGKNCTGDCIHDGKVKHNGQIWVLENDRCSVCSCQNGFVMCRRMVCDCENPTVDLFCCPECDPRLSSQCLHQNGETLYNSGDTWVQNCQQCRCLQGEVDCWPLPCPDVECEFSILPENECCPRCVTDPCQADTIRNDITKTCLDEMNVVRFTGSSWIKHGTECTLCQCKNGHICCSVDPQCLQEL.

The N-terminal stretch at 1-21 (MESRVLLRTFCLIFGLGAVWG) is a signal peptide. N53, N225, N293, and N298 each carry an N-linked (GlcNAc...) asparagine glycan. Residues 64-228 (PRSVKASTAT…AQCPDLNRTC (165 aa)) form the Laminin G-like domain. One can recognise a VWFC 1 domain in the interval 272-331 (RTCTMKGTTYREFESWIDGCKNCTCLNGTIQCETLICPNPDCPLNSALAYVDGKCCKECK). The 43-residue stretch at 397-439 (GYDFCSERHNCMENSVCRNLNDRAVCSCRDGFRALREDNAYCE) folds into the EGF-like 1 domain. Disulfide bonds link C401/C413, C407/C422, and C424/C438. D440, I441, and E443 together coordinate Ca(2+). In terms of domain architecture, EGF-like 2; calcium-binding spans 440-481 (DIDECAEGRHYCRENTMCVNTPGSFMCICKTGYIRIDDYSCT). Intrachain disulfides connect C444–C457, C451–C466, C468–C480, C486–C499, C493–C508, C510–C521, C525–C535, C529–C541, and C543–C552. Residues N459, T460, and S463 each contribute to the Ca(2+) site. The EGF-like 3; calcium-binding domain occupies 482-522 (EHDECITNQHNCDENALCFNTVGGHNCVCKPGYTGNGTTCK). N-linked (GlcNAc...) asparagine glycosylation occurs at N517. Residues 523 to 553 (AFCKDGCRNGGACIAANVCACPQGFTGPSCE) enclose the EGF-like 4 domain. An O-linked (GlcNAc...) threonine glycan is attached at T548. Ca(2+)-binding residues include D555, I556, and E558. Residues 555–601 (DIDECSDGFVQCDSRANCINLPGWYHCECRDGYHDNGMFSPSGESCE) form the EGF-like 5; calcium-binding domain. 3 disulfide bridges follow: C559–C572, C566–C581, and C583–C600. The Ca(2+) site is built by N574, L575, and W578. Residues D602, I603, and E605 each contribute to the Ca(2+) site. The region spanning 602–637 (DIDECGTGRHSCANDTICFNLDGGYDCRCPHGKNCT) is the EGF-like 6; calcium-binding domain. Intrachain disulfides connect C606-C619, C613-C628, and C630-C636. The N-linked (GlcNAc...) asparagine glycan is linked to N615. Residues N621, L622, and G625 each contribute to the Ca(2+) site. A glycan (N-linked (GlcNAc...) asparagine) is linked at N635. 2 VWFC domains span residues 638–693 (GDCI…PECD) and 698–756 (SQCL…PRCV).

In terms of assembly, homotrimer. Binds to PRKCB. Interacts with NICOL1; this interaction triggers epididymal differentiation.

The protein localises to the secreted. In terms of biological role, plays multiple roles in neural tissues, regulates neuronal proliferation, survival, differentiation, polarization, as well as axon guidance and synaptic functions. Plays an important role in axon development during neuronal differentiation through the MAPK intracellular signaling pathway. Via binding to its receptor ROBO3, plays a role in axon guidance, functions as a repulsive guidance cue for commissural axons, helping to steer them across the spinal cord midline. Required for neuron survival through the modulation of MAPK signaling pathways too. Involved in the regulation of hypothalamic GNRH secretion and the control of puberty. Its function is as follows. Testicular luminal protein that signals through a ROS1-pathway to regulate the epididymal initial segment (IS) maturation, sperm maturation and male fertility. The chain is Protein kinase C-binding protein NELL2 (NELL2) from Pongo abelii (Sumatran orangutan).